Reading from the N-terminus, the 144-residue chain is Snake venom vascular endothelial growth factor toxin cratrin (144 aa).

An N-terminal signal peptide occupies residues 1–24 (MAVYLLAVAILFCIQGWPSGTVQG). Pyrrolidone carboxylic acid is present on Gln-25. 3 disulfide bridges follow: Cys-38/Cys-80, Cys-69/Cys-115, and Cys-73/Cys-117. Residues 119–144 (PRSTVNNGKRKKNPKEGEPRAKFPLV) are disordered. Positions 132 to 144 (PKEGEPRAKFPLV) are enriched in basic and acidic residues.

Belongs to the PDGF/VEGF growth factor family. Snake venom VEGF subfamily. Homodimer; disulfide-linked. Interacts with VEGF receptor-1 (FLT1) with a high affinity, whereas it binds to VEGF receptor-2 (KDR) with a low affinity. Does not bind VEGF receptor-3 (FLT4). Expressed by the venom gland.

It localises to the secreted. Functionally, snake venom VEGFs that may contribute to venom dispersion and prey subjugation by inducing vascular permeability and hypotension. This protein induces an increase in capillary permeability after intradermal injection, as well as a drastic hypotensive effect after intravenous injection. The hypotension is mediated by nitric oxide (NO), which is produced by VEGF-activated endothelium NO synthase. Also induces angiogenesis in vitro. Like other crotalid VEGFs, this protein interacts with VEGF receptor-1 (FLT1) with a high affinity, whereas it binds to VEGF receptor-2 (KDR) with a low affinity. In Crotalus atrox (Western diamondback rattlesnake), this protein is Snake venom vascular endothelial growth factor toxin cratrin.